The following is a 158-amino-acid chain: 3-hydroxyacyl-[acyl-carrier-protein] dehydratase FabZ (158 aa).

The active site involves His62.

The protein belongs to the thioester dehydratase family. FabZ subfamily.

Its subcellular location is the cytoplasm. The catalysed reaction is a (3R)-hydroxyacyl-[ACP] = a (2E)-enoyl-[ACP] + H2O. Functionally, involved in unsaturated fatty acids biosynthesis. Catalyzes the dehydration of short chain beta-hydroxyacyl-ACPs and long chain saturated and unsaturated beta-hydroxyacyl-ACPs. The sequence is that of 3-hydroxyacyl-[acyl-carrier-protein] dehydratase FabZ from Novosphingobium aromaticivorans (strain ATCC 700278 / DSM 12444 / CCUG 56034 / CIP 105152 / NBRC 16084 / F199).